Reading from the N-terminus, the 233-residue chain is Biosynthetic peptidoglycan transglycosylase (233 aa).

A helical transmembrane segment spans residues 4–24 (LAYLAGCLIVGVVAMQVYFFL).

This sequence belongs to the glycosyltransferase 51 family.

The protein localises to the cell inner membrane. The enzyme catalyses [GlcNAc-(1-&gt;4)-Mur2Ac(oyl-L-Ala-gamma-D-Glu-L-Lys-D-Ala-D-Ala)](n)-di-trans,octa-cis-undecaprenyl diphosphate + beta-D-GlcNAc-(1-&gt;4)-Mur2Ac(oyl-L-Ala-gamma-D-Glu-L-Lys-D-Ala-D-Ala)-di-trans,octa-cis-undecaprenyl diphosphate = [GlcNAc-(1-&gt;4)-Mur2Ac(oyl-L-Ala-gamma-D-Glu-L-Lys-D-Ala-D-Ala)](n+1)-di-trans,octa-cis-undecaprenyl diphosphate + di-trans,octa-cis-undecaprenyl diphosphate + H(+). Its pathway is cell wall biogenesis; peptidoglycan biosynthesis. Peptidoglycan polymerase that catalyzes glycan chain elongation from lipid-linked precursors. This Cupriavidus metallidurans (strain ATCC 43123 / DSM 2839 / NBRC 102507 / CH34) (Ralstonia metallidurans) protein is Biosynthetic peptidoglycan transglycosylase.